A 122-amino-acid polypeptide reads, in one-letter code: Large ribosomal subunit protein uL14 (122 aa).

It belongs to the universal ribosomal protein uL14 family. In terms of assembly, part of the 50S ribosomal subunit. Forms a cluster with proteins L3 and L19. In the 70S ribosome, L14 and L19 interact and together make contacts with the 16S rRNA in bridges B5 and B8.

In terms of biological role, binds to 23S rRNA. Forms part of two intersubunit bridges in the 70S ribosome. This Desulforamulus reducens (strain ATCC BAA-1160 / DSM 100696 / MI-1) (Desulfotomaculum reducens) protein is Large ribosomal subunit protein uL14.